The primary structure comprises 335 residues: Adenosine deaminase (335 aa).

Positions 12 and 14 each coordinate Zn(2+). 2 residues coordinate substrate: His14 and Asp16. His197 lines the Zn(2+) pocket. The active-site Proton donor is Glu200. Asp278 contacts Zn(2+).

The protein belongs to the metallo-dependent hydrolases superfamily. Adenosine and AMP deaminases family. Adenosine deaminase subfamily. Zn(2+) serves as cofactor.

It catalyses the reaction adenosine + H2O + H(+) = inosine + NH4(+). The enzyme catalyses 2'-deoxyadenosine + H2O + H(+) = 2'-deoxyinosine + NH4(+). Its function is as follows. Catalyzes the hydrolytic deamination of adenosine and 2-deoxyadenosine. This is Adenosine deaminase from Clostridium botulinum (strain ATCC 19397 / Type A).